The primary structure comprises 883 residues: Protein SEY1 homolog (883 aa).

Over Met1–Asn795 the chain is Cytoplasmic. A GB1/RHD3-type G domain is found at Gly33–Cys279. Gly43–Ser50 provides a ligand contact to GTP. Residues Leu673–Ser693 are a coiled coil. Residues Val796 to Ile816 form a helical membrane-spanning segment. Topologically, residues Arg817–Phe819 are lumenal. The chain crosses the membrane as a helical span at residues Phe820–Phe840. Residues Phe841–Asp883 are Cytoplasmic-facing.

This sequence belongs to the TRAFAC class dynamin-like GTPase superfamily. GB1/RHD3 GTPase family. RHD3 subfamily.

Its subcellular location is the endoplasmic reticulum membrane. Functionally, probable GTP-binding protein involved in generating and maintaining the structure of the tubular endoplasmic reticulum network. This Plasmodium knowlesi (strain H) protein is Protein SEY1 homolog.